The sequence spans 403 residues: NADH-quinone oxidoreductase subunit D (403 aa).

This sequence belongs to the complex I 49 kDa subunit family. In terms of assembly, NDH-1 is composed of 14 different subunits. Subunits NuoB, C, D, E, F, and G constitute the peripheral sector of the complex.

It is found in the cell inner membrane. It carries out the reaction a quinone + NADH + 5 H(+)(in) = a quinol + NAD(+) + 4 H(+)(out). In terms of biological role, NDH-1 shuttles electrons from NADH, via FMN and iron-sulfur (Fe-S) centers, to quinones in the respiratory chain. The immediate electron acceptor for the enzyme in this species is believed to be ubiquinone. Couples the redox reaction to proton translocation (for every two electrons transferred, four hydrogen ions are translocated across the cytoplasmic membrane), and thus conserves the redox energy in a proton gradient. This Pelobacter propionicus (strain DSM 2379 / NBRC 103807 / OttBd1) protein is NADH-quinone oxidoreductase subunit D.